The following is a 139-amino-acid chain: Putative pre-16S rRNA nuclease (139 aa).

It belongs to the YqgF nuclease family.

Its subcellular location is the cytoplasm. Its function is as follows. Could be a nuclease involved in processing of the 5'-end of pre-16S rRNA. This is Putative pre-16S rRNA nuclease from Streptococcus equi subsp. equi (strain 4047).